Here is a 712-residue protein sequence, read N- to C-terminus: MQMKLKSILLGAALLLGASGVAKADKGMWLLNELNQENLDRMRELGFTLPLDSLYSFDKPSIANAVVIFGGGCTGITVSDQGLIFTNHHCGYGAIQSQSTVDHDYLRDGFVSRTMGEELPIPGLSVKYLRKIVKVTDKVEGQLKGITDEMERLRKAQEVCQELAKKENADENQLCIVEPFYSNNEYFLIVYDVFKDVRMVFAPPSSVGKFGGDTDNWMWPRHTGDFSVFRVYAGADNRPAEYSKDNKPYKPVYFAAVSMQGYKADDYAMTIGFPGSTDRYLTSWGVEDRIENENNPRIEVRGIKQGIWKEAMSADQATRIKYASKYAQSANYWKNSIGMNRGLARLDVIGRKRAEERAFADWIRKNGKSAVYGDVLSSLEKAYKEGAKANREMTYLSETLFGGTEVVRFAQFANALATNPDAHAGILKSLDDKYKDYLPSLDRKVLPAMLDIVRRRIPADKLPDIFKNVIDKKFKGDTKKYADFVFDKSVVPYSDKFHAMLKSMDKEKFAKAIEKDPAVELSKSVIAAARAIQADAMANAYAIEKGKRLFFAGLREMYPGRALPSDANFTMRMSYGSIKGYEPQDGAWYNYHTTGKGVLEKQDPKSDEFAVQENILDLFRTKNYGRYAENGQLHIAFLSNNDITGGNSGSPVFDKNGRLIGLAFDGNWEAMSGDIEFEPDLQRTISVDIRYVLFMIDKWGQCPRLIQELKLI.

Residues 1-23 (MQMKLKSILLGAALLLGASGVAK) form the signal peptide. Histidine 89 acts as the Charge relay system in catalysis. Residues 136–173 (TDKVEGQLKGITDEMERLRKAQEVCQELAKKENADENQ) are a coiled coil. Residues aspartate 225 and serine 648 each act as charge relay system in the active site.

The protein belongs to the peptidase S46 family.

It is found in the cell outer membrane. Is inhibited in vitro by typical serine protease inhibitors like diisopropyl fluorophosphate, Pefablock, and 3,4-dichloroisocoumarin, but not by typical cysteine class inhibitors such as E-64 or iododoacetic acid. Catalyzes the removal of dipeptides from the N-terminus of oligopeptides. Shows a broad specificity for both aliphatic and aromatic residues in the P1 position, with glycine or proline being not acceptable in this position. Most potently cleaves the synthetic substrate Met-Leu-methylcoumaryl-7-amide (Met-Leu-MCA), Leu-Arg-MCA and Lys-Ala-MCA to a lesser extent. Is likely involved in amino acid metabolism and bacterial growth of asaccharolytic P.gingivalis, that utilizes amino acids from extracellular proteinaceous nutrients as energy and carbon sources. This chain is Dipeptidyl-peptidase 7, found in Porphyromonas gingivalis (strain ATCC 33277 / DSM 20709 / CIP 103683 / JCM 12257 / NCTC 11834 / 2561).